The following is a 278-amino-acid chain: 4-deoxy-L-threo-5-hexosulose-uronate ketol-isomerase (278 aa).

Residues histidine 196, histidine 198, glutamate 203, and histidine 245 each coordinate Zn(2+).

Belongs to the KduI family. The cofactor is Zn(2+).

The catalysed reaction is 5-dehydro-4-deoxy-D-glucuronate = 3-deoxy-D-glycero-2,5-hexodiulosonate. Its pathway is glycan metabolism; pectin degradation; 2-dehydro-3-deoxy-D-gluconate from pectin: step 4/5. Catalyzes the isomerization of 5-dehydro-4-deoxy-D-glucuronate to 3-deoxy-D-glycero-2,5-hexodiulosonate. The chain is 4-deoxy-L-threo-5-hexosulose-uronate ketol-isomerase from Pectobacterium carotovorum subsp. carotovorum (Erwinia carotovora subsp. carotovora).